The sequence spans 396 residues: Cystathionine beta-lyase (396 aa).

K214 is modified (N6-(pyridoxal phosphate)lysine).

It belongs to the trans-sulfuration enzymes family. Homodimer. The cofactor is pyridoxal 5'-phosphate.

It is found in the cytoplasm. The enzyme catalyses L,L-cystathionine + H2O = L-homocysteine + pyruvate + NH4(+). It catalyses the reaction an S-substituted L-cysteine + H2O = a thiol + pyruvate + NH4(+). It participates in amino-acid biosynthesis; L-methionine biosynthesis via de novo pathway; L-homocysteine from L-cystathionine: step 1/1. In terms of biological role, catalyzes the cleavage of cystathionine to homocysteine, pyruvate and ammonia during methionine biosynthesis. Also has cytotoxic activity toward osteogenic, osteosarcoma and tracheal cells, in vitro. The chemical basis for cell toxicity might be the formation and subsequent transfer of sulfane-sulfur to proteins, derived via beta-cystathionase cleavage of L-cystine. In Bordetella avium, this protein is Cystathionine beta-lyase (metC).